Here is a 123-residue protein sequence, read N- to C-terminus: Ribonuclease P protein component (123 aa).

The protein belongs to the RnpA family. As to quaternary structure, consists of a catalytic RNA component (M1 or rnpB) and a protein subunit.

The catalysed reaction is Endonucleolytic cleavage of RNA, removing 5'-extranucleotides from tRNA precursor.. Functionally, RNaseP catalyzes the removal of the 5'-leader sequence from pre-tRNA to produce the mature 5'-terminus. It can also cleave other RNA substrates such as 4.5S RNA. The protein component plays an auxiliary but essential role in vivo by binding to the 5'-leader sequence and broadening the substrate specificity of the ribozyme. The polypeptide is Ribonuclease P protein component (Streptomyces griseus subsp. griseus (strain JCM 4626 / CBS 651.72 / NBRC 13350 / KCC S-0626 / ISP 5235)).